The following is a 676-amino-acid chain: SPARC-like protein 1 (676 aa).

The first 16 residues, 1-16 (MKTVLLLICLLGSAFT), serve as a signal peptide directing secretion. Positions 35–44 (EKHKYTHSEM) are enriched in basic and acidic residues. Disordered regions lie at residues 35-151 (EKHK…WALR), 173-369 (NTVG…GVYR), and 385-437 (SEDN…RNST). A compositionally biased stretch (polar residues) spans 95–108 (KNSLRSINFLTLHS). Asn-182 carries N-linked (GlcNAc...) asparagine glycosylation. A compositionally biased stretch (acidic residues) spans 184-202 (SEEEEAGEEEDEEWGEETD). Basic and acidic residues-rich tracts occupy residues 249–266 (EKFSMEEESQEKLYKEGK) and 273–291 (NHNEDQGEKRQSEESKEHF). The span at 312–328 (NAEEDDNDSGDDGEEDL) shows a compositional bias: acidic residues. N-linked (GlcNAc...) asparagine glycosylation occurs at Asn-318. The span at 385–394 (SEDNHYHHEP) shows a compositional bias: basic and acidic residues. Asn-396 carries an N-linked (GlcNAc...) asparagine glycan. Residues 397 to 408 (SSSKQQLQTSSS) are compositionally biased toward low complexity. An N-linked (GlcNAc...) asparagine glycan is attached at Asn-413. Basic and acidic residues predominate over residues 415–433 (TEHEDEVKTTGGSYHEESA). Residue Asn-435 is glycosylated (N-linked (GlcNAc...) asparagine). One can recognise a Follistatin-like domain in the interval 444-466 (LCRNFHCKRGKVCQADKQGKPSC). Cystine bridges form between Cys-445-Cys-456, Cys-450-Cys-466, Cys-468-Cys-502, Cys-474-Cys-495, Cys-484-Cys-521, Cys-527-Cys-638, and Cys-646-Cys-662. The region spanning 462–523 (GKPSCICQDP…HLDYMGACKH (62 aa)) is the Kazal-like domain. Asn-488 carries N-linked (GlcNAc...) asparagine glycosylation. Residues 634 to 669 (PMEHCITRFFQECDGDQDKLITLKEWCHCFAIKEED) form the EF-hand domain. 4 residues coordinate Ca(2+): Asp-647, Asp-649, Asp-651, and Glu-658.

The protein belongs to the SPARC family. Glial (Mueller) cells of the neuroretina.

It localises to the secreted. It is found in the extracellular space. The protein localises to the extracellular matrix. Could play a role in the late stage of neuroretina morphogenesis. The sequence is that of SPARC-like protein 1 (SPARCL1) from Coturnix japonica (Japanese quail).